The chain runs to 347 residues: D-alanine--D-alanine ligase (347 aa).

The ATP-grasp domain maps to 134–332 (KLYAKDLGVK…LAQSLPKTPK (199 aa)). 161 to 216 (LIGFNFPFIVKPSNAGSSLGVNVVKEEKELIYALDSAFEYSKEVLIEPFIQGVKEY) contacts ATP. The Mg(2+) site is built by D288, E300, and N302.

Belongs to the D-alanine--D-alanine ligase family. The cofactor is Mg(2+). It depends on Mn(2+) as a cofactor.

The protein localises to the cytoplasm. It catalyses the reaction 2 D-alanine + ATP = D-alanyl-D-alanine + ADP + phosphate + H(+). It participates in cell wall biogenesis; peptidoglycan biosynthesis. Cell wall formation. In Helicobacter pylori (strain J99 / ATCC 700824) (Campylobacter pylori J99), this protein is D-alanine--D-alanine ligase.